The chain runs to 339 residues: MNRLIKFSFNLILIFVLGLGLSGCVTTTRIPVQSSSPWEEIELANDDNPLDIAFVDDNHGFLVGANRLILETTDGGSTWEERDLDIPAEENFRLMSIDFKEDEGWIVGQPNLVLHSEDAGKNWTRLSLGSQLPGNPYLITTLDTSSAELATTAGAVYRTTDGGKNWEGRVAEASGGVRDLRRKEDGTYVSVSSLGNFFVTLDKTDQAWQSHQRASSKRVQTLGFKPDGQLWMLSRGAEIRLNDASGDYESWSKPIIPLVNGYNYMDMAWDPEGNIWAGGGNGTLLVSKDDGNSWEKDPIGYATPTNFIRIFFLKNPNGNPPKGFVLGERGHVLRWVGYS.

The signal sequence occupies residues 1 to 23 (MNRLIKFSFNLILIFVLGLGLSG). Cys24 carries the N-palmitoyl cysteine lipid modification. Cys24 is lipidated: S-diacylglycerol cysteine.

This sequence belongs to the Ycf48 family. As to quaternary structure, part of early PSII assembly complexes which includes D1 (psbA) and PsbI; not found in mature PSII. Binds to the lumenal side of PSII complexes. Interacts with YidC.

The protein localises to the cellular thylakoid membrane. Its function is as follows. A factor required for optimal assembly of photosystem II (PSII), acting in the early stages of PSII assembly. Also plays a role in replacement of photodamaged D1 (psbA). Assists YidC in synthesis of chlorophyll-binding proteins. In Prochlorococcus marinus (strain SARG / CCMP1375 / SS120), this protein is Photosystem II assembly lipoprotein Ycf48.